A 342-amino-acid polypeptide reads, in one-letter code: Holliday junction branch migration complex subunit RuvB (342 aa).

A large ATPase domain (RuvB-L) region spans residues 1 to 184 (MEENFDIREQ…FGINLHLEYY (184 aa)). ATP contacts are provided by residues leucine 23, arginine 24, glycine 65, lysine 68, threonine 69, threonine 70, 131–133 (EDY), arginine 174, tyrosine 184, and arginine 221. Position 69 (threonine 69) interacts with Mg(2+). The tract at residues 185 to 255 (DDDVLTSIIR…IARFALEALN (71 aa)) is small ATPAse domain (RuvB-S). Residues 258–342 (RYGLDEIDNK…YNSQKTLFDD (85 aa)) are head domain (RuvB-H). 2 residues coordinate DNA: arginine 313 and arginine 318.

It belongs to the RuvB family. Homohexamer. Forms an RuvA(8)-RuvB(12)-Holliday junction (HJ) complex. HJ DNA is sandwiched between 2 RuvA tetramers; dsDNA enters through RuvA and exits via RuvB. An RuvB hexamer assembles on each DNA strand where it exits the tetramer. Each RuvB hexamer is contacted by two RuvA subunits (via domain III) on 2 adjacent RuvB subunits; this complex drives branch migration. In the full resolvosome a probable DNA-RuvA(4)-RuvB(12)-RuvC(2) complex forms which resolves the HJ.

The protein localises to the cytoplasm. It catalyses the reaction ATP + H2O = ADP + phosphate + H(+). The RuvA-RuvB-RuvC complex processes Holliday junction (HJ) DNA during genetic recombination and DNA repair, while the RuvA-RuvB complex plays an important role in the rescue of blocked DNA replication forks via replication fork reversal (RFR). RuvA specifically binds to HJ cruciform DNA, conferring on it an open structure. The RuvB hexamer acts as an ATP-dependent pump, pulling dsDNA into and through the RuvAB complex. RuvB forms 2 homohexamers on either side of HJ DNA bound by 1 or 2 RuvA tetramers; 4 subunits per hexamer contact DNA at a time. Coordinated motions by a converter formed by DNA-disengaged RuvB subunits stimulates ATP hydrolysis and nucleotide exchange. Immobilization of the converter enables RuvB to convert the ATP-contained energy into a lever motion, pulling 2 nucleotides of DNA out of the RuvA tetramer per ATP hydrolyzed, thus driving DNA branch migration. The RuvB motors rotate together with the DNA substrate, which together with the progressing nucleotide cycle form the mechanistic basis for DNA recombination by continuous HJ branch migration. Branch migration allows RuvC to scan DNA until it finds its consensus sequence, where it cleaves and resolves cruciform DNA. In Phocaeicola vulgatus (strain ATCC 8482 / DSM 1447 / JCM 5826 / CCUG 4940 / NBRC 14291 / NCTC 11154) (Bacteroides vulgatus), this protein is Holliday junction branch migration complex subunit RuvB.